Reading from the N-terminus, the 204-residue chain is Small ribosomal subunit protein uS4 (204 aa).

In terms of domain architecture, S4 RNA-binding spans 92 to 157; sequence RRLDALVLRS…KPLFEVAREG (66 aa).

This sequence belongs to the universal ribosomal protein uS4 family. As to quaternary structure, part of the 30S ribosomal subunit. Contacts protein S5. The interaction surface between S4 and S5 is involved in control of translational fidelity.

In terms of biological role, one of the primary rRNA binding proteins, it binds directly to 16S rRNA where it nucleates assembly of the body of the 30S subunit. Its function is as follows. With S5 and S12 plays an important role in translational accuracy. In Streptomyces avermitilis (strain ATCC 31267 / DSM 46492 / JCM 5070 / NBRC 14893 / NCIMB 12804 / NRRL 8165 / MA-4680), this protein is Small ribosomal subunit protein uS4.